The sequence spans 495 residues: Protein nucleotidyltransferase YdiU (495 aa).

ATP contacts are provided by G92, G94, R95, K114, D126, G127, R177, and R184. Residue D261 is the Proton acceptor of the active site. 2 residues coordinate Mg(2+): N262 and D271. Residue D271 coordinates ATP.

Belongs to the SELO family. It depends on Mg(2+) as a cofactor. Mn(2+) is required as a cofactor.

It catalyses the reaction L-seryl-[protein] + ATP = 3-O-(5'-adenylyl)-L-seryl-[protein] + diphosphate. The catalysed reaction is L-threonyl-[protein] + ATP = 3-O-(5'-adenylyl)-L-threonyl-[protein] + diphosphate. It carries out the reaction L-tyrosyl-[protein] + ATP = O-(5'-adenylyl)-L-tyrosyl-[protein] + diphosphate. The enzyme catalyses L-histidyl-[protein] + UTP = N(tele)-(5'-uridylyl)-L-histidyl-[protein] + diphosphate. It catalyses the reaction L-seryl-[protein] + UTP = O-(5'-uridylyl)-L-seryl-[protein] + diphosphate. The catalysed reaction is L-tyrosyl-[protein] + UTP = O-(5'-uridylyl)-L-tyrosyl-[protein] + diphosphate. Functionally, nucleotidyltransferase involved in the post-translational modification of proteins. It can catalyze the addition of adenosine monophosphate (AMP) or uridine monophosphate (UMP) to a protein, resulting in modifications known as AMPylation and UMPylation. The polypeptide is Protein nucleotidyltransferase YdiU (Bordetella bronchiseptica (strain ATCC BAA-588 / NCTC 13252 / RB50) (Alcaligenes bronchisepticus)).